Reading from the N-terminus, the 145-residue chain is 3-dehydroquinate dehydratase (145 aa).

Tyr23 (proton acceptor) is an active-site residue. Asn74, His80, and Asp87 together coordinate substrate. His100 acts as the Proton donor in catalysis. Substrate contacts are provided by residues 101–102 (IS) and Arg111.

The protein belongs to the type-II 3-dehydroquinase family. In terms of assembly, homododecamer.

The enzyme catalyses 3-dehydroquinate = 3-dehydroshikimate + H2O. Its pathway is metabolic intermediate biosynthesis; chorismate biosynthesis; chorismate from D-erythrose 4-phosphate and phosphoenolpyruvate: step 3/7. Functionally, catalyzes a trans-dehydration via an enolate intermediate. The chain is 3-dehydroquinate dehydratase from Mycobacterium leprae (strain Br4923).